The primary structure comprises 296 residues: Nucleotide-binding protein Pnec_1620 (296 aa).

Residue 8–15 (GISGSGKS) coordinates ATP. 57–60 (DARR) is a binding site for GTP.

The protein belongs to the RapZ-like family.

Displays ATPase and GTPase activities. The polypeptide is Nucleotide-binding protein Pnec_1620 (Polynucleobacter necessarius subsp. necessarius (strain STIR1)).